A 206-amino-acid polypeptide reads, in one-letter code: Thiamine-phosphate synthase (206 aa).

Residues 37–41 (QYRNK) and asparagine 69 each bind 4-amino-2-methyl-5-(diphosphooxymethyl)pyrimidine. Aspartate 70 and aspartate 89 together coordinate Mg(2+). Serine 108 serves as a coordination point for 4-amino-2-methyl-5-(diphosphooxymethyl)pyrimidine. 135-137 (SST) lines the 2-[(2R,5Z)-2-carboxy-4-methylthiazol-5(2H)-ylidene]ethyl phosphate pocket. Lysine 138 contributes to the 4-amino-2-methyl-5-(diphosphooxymethyl)pyrimidine binding site. 2-[(2R,5Z)-2-carboxy-4-methylthiazol-5(2H)-ylidene]ethyl phosphate contacts are provided by residues glycine 165 and 185–186 (IS).

The protein belongs to the thiamine-phosphate synthase family. It depends on Mg(2+) as a cofactor.

The enzyme catalyses 2-[(2R,5Z)-2-carboxy-4-methylthiazol-5(2H)-ylidene]ethyl phosphate + 4-amino-2-methyl-5-(diphosphooxymethyl)pyrimidine + 2 H(+) = thiamine phosphate + CO2 + diphosphate. It carries out the reaction 2-(2-carboxy-4-methylthiazol-5-yl)ethyl phosphate + 4-amino-2-methyl-5-(diphosphooxymethyl)pyrimidine + 2 H(+) = thiamine phosphate + CO2 + diphosphate. It catalyses the reaction 4-methyl-5-(2-phosphooxyethyl)-thiazole + 4-amino-2-methyl-5-(diphosphooxymethyl)pyrimidine + H(+) = thiamine phosphate + diphosphate. It functions in the pathway cofactor biosynthesis; thiamine diphosphate biosynthesis; thiamine phosphate from 4-amino-2-methyl-5-diphosphomethylpyrimidine and 4-methyl-5-(2-phosphoethyl)-thiazole: step 1/1. Its function is as follows. Condenses 4-methyl-5-(beta-hydroxyethyl)thiazole monophosphate (THZ-P) and 2-methyl-4-amino-5-hydroxymethyl pyrimidine pyrophosphate (HMP-PP) to form thiamine monophosphate (TMP). This Azoarcus sp. (strain BH72) protein is Thiamine-phosphate synthase.